The sequence spans 421 residues: 3-alpha-mycarosylerythronolide B desosaminyl transferase (421 aa).

Positions 1 to 23 (MRVVFSSMASKSHLFGLVPLAWA) are cleaved as a signal peptide.

It belongs to the glycosyltransferase 28 family. Heterotetramer composed of EryCII and EryCIII.

The enzyme catalyses 3-O-alpha-L-mycarosylerythronolide B + dTDP-alpha-D-desosamine = erythromycin D + dTDP + H(+). It participates in antibiotic biosynthesis; erythromycin biosynthesis. Catalyzes the conversion of alpha-L-mycarosylerythronolide B into erythromycin D in the erythromycin biosynthesis pathway. The sequence is that of 3-alpha-mycarosylerythronolide B desosaminyl transferase (eryCIII) from Saccharopolyspora erythraea (strain ATCC 11635 / DSM 40517 / JCM 4748 / NBRC 13426 / NCIMB 8594 / NRRL 2338).